A 77-amino-acid chain; its full sequence is MKEQKLIHEGVIIESLPNGMFRVRLDNEDLILGYVSGRIRRSFIRILPGDRVKIEVSRYDSTKGRIIYRLRNKDSND.

Residues 1-71 (MKEQKLIHEG…TKGRIIYRLR (71 aa)) enclose the S1-like domain.

Belongs to the IF-1 family. Component of the 30S ribosomal translation pre-initiation complex which assembles on the 30S ribosome in the order IF-2 and IF-3, IF-1 and N-formylmethionyl-tRNA(fMet); mRNA recruitment can occur at any time during PIC assembly.

Its subcellular location is the plastid. It localises to the chloroplast. Its function is as follows. One of the essential components for the initiation of protein synthesis. Stabilizes the binding of IF-2 and IF-3 on the 30S subunit to which N-formylmethionyl-tRNA(fMet) subsequently binds. Helps modulate mRNA selection, yielding the 30S pre-initiation complex (PIC). Upon addition of the 50S ribosomal subunit IF-1, IF-2 and IF-3 are released leaving the mature 70S translation initiation complex. The sequence is that of Translation initiation factor IF-1, chloroplastic from Dioscorea elephantipes (Elephant's foot yam).